We begin with the raw amino-acid sequence, 388 residues long: Succinate--CoA ligase [ADP-forming] subunit beta (388 aa).

The ATP-grasp domain maps to 9 to 245 (KELLASYGLP…KSQENERELK (237 aa)). ATP is bound by residues K46, 53 to 55 (GRG), E100, Y103, and E108. Mg(2+)-binding residues include N200 and D214. Substrate is bound by residues N265 and 322–324 (GIV).

It belongs to the succinate/malate CoA ligase beta subunit family. Heterotetramer of two alpha and two beta subunits. Requires Mg(2+) as cofactor.

The enzyme catalyses succinate + ATP + CoA = succinyl-CoA + ADP + phosphate. The catalysed reaction is GTP + succinate + CoA = succinyl-CoA + GDP + phosphate. It participates in carbohydrate metabolism; tricarboxylic acid cycle; succinate from succinyl-CoA (ligase route): step 1/1. Succinyl-CoA synthetase functions in the citric acid cycle (TCA), coupling the hydrolysis of succinyl-CoA to the synthesis of either ATP or GTP and thus represents the only step of substrate-level phosphorylation in the TCA. The beta subunit provides nucleotide specificity of the enzyme and binds the substrate succinate, while the binding sites for coenzyme A and phosphate are found in the alpha subunit. This Neisseria meningitidis serogroup A / serotype 4A (strain DSM 15465 / Z2491) protein is Succinate--CoA ligase [ADP-forming] subunit beta.